A 570-amino-acid chain; its full sequence is Sulfite reductase [NADPH] hemoprotein beta-component 1 (570 aa).

[4Fe-4S] cluster contacts are provided by cysteine 434, cysteine 440, cysteine 479, and cysteine 483. Cysteine 483 contributes to the siroheme binding site.

It belongs to the nitrite and sulfite reductase 4Fe-4S domain family. Alpha(8)-beta(8). The alpha component is a flavoprotein, the beta component is a hemoprotein. The cofactor is siroheme. [4Fe-4S] cluster serves as cofactor.

It carries out the reaction hydrogen sulfide + 3 NADP(+) + 3 H2O = sulfite + 3 NADPH + 4 H(+). Its pathway is sulfur metabolism; hydrogen sulfide biosynthesis; hydrogen sulfide from sulfite (NADPH route): step 1/1. In terms of biological role, component of the sulfite reductase complex that catalyzes the 6-electron reduction of sulfite to sulfide. This is one of several activities required for the biosynthesis of L-cysteine from sulfate. The chain is Sulfite reductase [NADPH] hemoprotein beta-component 1 from Klebsiella pneumoniae (strain 342).